Consider the following 454-residue polypeptide: DNA repair protein RadA (454 aa).

The C4-type zinc finger occupies 11-28 (CTECGTHSPKWLGQCSGC). Residue 94-101 (GEPGIGKS) coordinates ATP. Positions 251 to 255 (KNRFG) match the RadA KNRFG motif motif. Positions 350 to 454 (DVFLSIAGGL…TIKDAVRLLQ (105 aa)) are lon-protease-like.

It belongs to the RecA family. RadA subfamily.

Functionally, DNA-dependent ATPase involved in processing of recombination intermediates, plays a role in repairing DNA breaks. Stimulates the branch migration of RecA-mediated strand transfer reactions, allowing the 3' invading strand to extend heteroduplex DNA faster. Binds ssDNA in the presence of ADP but not other nucleotides, has ATPase activity that is stimulated by ssDNA and various branched DNA structures, but inhibited by SSB. Does not have RecA's homology-searching function. This Chlamydia trachomatis serovar D (strain ATCC VR-885 / DSM 19411 / UW-3/Cx) protein is DNA repair protein RadA.